The chain runs to 423 residues: Mannan endo-1,4-beta-mannosidase (423 aa).

The N-terminal stretch at 1-27 (MKTITTARLPWAAQSFALGICLIALLG) is a signal peptide. A GH26 domain is found at 56–409 (METRSLFAFM…YADEFTAFNR (354 aa)). Positions 121, 143, and 162 each coordinate substrate. Catalysis depends on Glu-212, which acts as the Proton donor. Substrate is bound by residues Trp-217 and Tyr-285. Glu-320 (nucleophile) is an active-site residue. Residues 360–361 (WR) and His-377 each bind substrate.

It belongs to the glycosyl hydrolase 26 family. Homodimer.

It carries out the reaction Random hydrolysis of (1-&gt;4)-beta-D-mannosidic linkages in mannans, galactomannans and glucomannans.. Catalyzes the endo hydrolysis of beta-1,4-linked mannan and galactomannan, but displays little activity towards other polysaccharides located in the plant cell wall. Preferentially hydrolyzes the larger oligosaccharides and has greater activity against non-substituted polysaccharides. It displays tight specificity for mannose at both the -2 and the -1 subsites. Appears to act in synergy with alpha-galactosidase (AgaA) to elicit hydrolysis of galactomannan. In Cellvibrio japonicus (strain Ueda107) (Pseudomonas fluorescens subsp. cellulosa), this protein is Mannan endo-1,4-beta-mannosidase.